A 536-amino-acid chain; its full sequence is Glutamyl-tRNA(Gln) amidotransferase subunit B, mitochondrial (536 aa).

The N-terminal 8 residues, 1–8 (MLRVHRLY), are a transit peptide targeting the mitochondrion.

Belongs to the GatB/GatE family. GatB subfamily. As to quaternary structure, subunit of the heterotrimeric GatFAB amidotransferase (AdT) complex, composed of A, B and F subunits.

Its subcellular location is the mitochondrion. It carries out the reaction L-glutamyl-tRNA(Gln) + L-glutamine + ATP + H2O = L-glutaminyl-tRNA(Gln) + L-glutamate + ADP + phosphate + H(+). Allows the formation of correctly charged Gln-tRNA(Gln) through the transamidation of misacylated Glu-tRNA(Gln) in the mitochondria. The reaction takes place in the presence of glutamine and ATP through an activated gamma-phospho-Glu-tRNA(Gln). This chain is Glutamyl-tRNA(Gln) amidotransferase subunit B, mitochondrial, found in Eremothecium gossypii (strain ATCC 10895 / CBS 109.51 / FGSC 9923 / NRRL Y-1056) (Yeast).